The chain runs to 417 residues: Glutamyl-tRNA reductase (417 aa).

Substrate contacts are provided by residues 48 to 51 (TCNR), Ser100, 105 to 107 (EDQ), and Gln111. The active-site Nucleophile is Cys49. 180 to 185 (GAGETG) serves as a coordination point for NADP(+).

The protein belongs to the glutamyl-tRNA reductase family. As to quaternary structure, homodimer.

It carries out the reaction (S)-4-amino-5-oxopentanoate + tRNA(Glu) + NADP(+) = L-glutamyl-tRNA(Glu) + NADPH + H(+). It participates in porphyrin-containing compound metabolism; protoporphyrin-IX biosynthesis; 5-aminolevulinate from L-glutamyl-tRNA(Glu): step 1/2. Functionally, catalyzes the NADPH-dependent reduction of glutamyl-tRNA(Glu) to glutamate 1-semialdehyde (GSA). The sequence is that of Glutamyl-tRNA reductase from Methanothrix thermoacetophila (strain DSM 6194 / JCM 14653 / NBRC 101360 / PT) (Methanosaeta thermophila).